Consider the following 194-residue polypeptide: tRNA (guanosine(18)-2'-O)-methyltransferase (194 aa).

Residues Thr99, 122 to 126 (GAEKW), Ile142, and Leu151 contribute to the S-adenosyl-L-methionine site.

This sequence belongs to the class IV-like SAM-binding methyltransferase superfamily. RNA methyltransferase TrmH family. Monomer.

The catalysed reaction is guanosine(18) in tRNA + S-adenosyl-L-methionine = 2'-O-methylguanosine(18) in tRNA + S-adenosyl-L-homocysteine + H(+). Its activity is regulated as follows. Stimulated by magnesium ions and spermine. Inhibited by S-adenosyl-homocysteine. Functionally, catalyzes the 2'-O methylation of guanosine at position 18 in tRNA. This is tRNA (guanosine(18)-2'-O)-methyltransferase from Thermus thermophilus (strain ATCC BAA-163 / DSM 7039 / HB27).